Consider the following 299-residue polypeptide: Methionyl-tRNA formyltransferase (299 aa).

Position 109 to 112 (109 to 112 (SLLP)) interacts with (6S)-5,6,7,8-tetrahydrofolate.

This sequence belongs to the Fmt family.

The enzyme catalyses L-methionyl-tRNA(fMet) + (6R)-10-formyltetrahydrofolate = N-formyl-L-methionyl-tRNA(fMet) + (6S)-5,6,7,8-tetrahydrofolate + H(+). Attaches a formyl group to the free amino group of methionyl-tRNA(fMet). The formyl group appears to play a dual role in the initiator identity of N-formylmethionyl-tRNA by promoting its recognition by IF2 and preventing the misappropriation of this tRNA by the elongation apparatus. The protein is Methionyl-tRNA formyltransferase of Wolbachia pipientis subsp. Culex pipiens (strain wPip).